The chain runs to 30 residues: Conopeptide Vi002 (30 aa).

In terms of tissue distribution, expressed by the venom gland.

It is found in the secreted. This is Conopeptide Vi002 from Conus virgo (Virgin cone).